A 94-amino-acid chain; its full sequence is Aspartyl/glutamyl-tRNA(Asn/Gln) amidotransferase subunit C (94 aa).

It belongs to the GatC family. As to quaternary structure, heterotrimer of A, B and C subunits.

It carries out the reaction L-glutamyl-tRNA(Gln) + L-glutamine + ATP + H2O = L-glutaminyl-tRNA(Gln) + L-glutamate + ADP + phosphate + H(+). The catalysed reaction is L-aspartyl-tRNA(Asn) + L-glutamine + ATP + H2O = L-asparaginyl-tRNA(Asn) + L-glutamate + ADP + phosphate + 2 H(+). Its function is as follows. Allows the formation of correctly charged Asn-tRNA(Asn) or Gln-tRNA(Gln) through the transamidation of misacylated Asp-tRNA(Asn) or Glu-tRNA(Gln) in organisms which lack either or both of asparaginyl-tRNA or glutaminyl-tRNA synthetases. The reaction takes place in the presence of glutamine and ATP through an activated phospho-Asp-tRNA(Asn) or phospho-Glu-tRNA(Gln). This Desulfotalea psychrophila (strain LSv54 / DSM 12343) protein is Aspartyl/glutamyl-tRNA(Asn/Gln) amidotransferase subunit C.